The chain runs to 446 residues: Glutamine synthetase (446 aa).

The 88-residue stretch at 15–102 (RDIRFVRLWF…MFCDITMPDG (88 aa)) folds into the GS beta-grasp domain. Positions 109-446 (PRHVLRRQLT…PYELRTYLSL (338 aa)) constitute a GS catalytic domain. Mg(2+) is bound by residues Glu132 and Glu134. Glu184 contacts ATP. Mg(2+) contacts are provided by Glu189 and Glu196. Gly241 lines the L-glutamate pocket. Position 245 (His245) interacts with Mg(2+). ATP contacts are provided by residues 247 to 249 (HMS) and Ser249. L-glutamate is bound by residues Arg298, Glu304, and Arg316. ATP contacts are provided by Arg316 and Arg321. Glu336 lines the Mg(2+) pocket. Arg338 is a binding site for L-glutamate.

It belongs to the glutamine synthetase family. Oligomer of 12 subunits arranged in the form of two hexagons. In its feedback-inhibited form, interacts with TnrA in order to block its DNA-binding activity. Mg(2+) is required as a cofactor.

The protein resides in the cytoplasm. It catalyses the reaction L-glutamate + NH4(+) + ATP = L-glutamine + ADP + phosphate + H(+). With respect to regulation, inhibited by glutamine. Glutamine synthetase (GS) is an unusual multitasking protein that functions as an enzyme, a transcription coregulator, and a chaperone in ammonium assimilation and in the regulation of genes involved in nitrogen metabolism. It catalyzes the ATP-dependent biosynthesis of glutamine from glutamate and ammonia. Feedback-inhibited GlnA also interacts with and regulates the activity of the transcriptional regulator TnrA. During nitrogen limitation, TnrA is in its DNA-binding active state and turns on the transcription of genes required for nitrogen assimilation. Under conditions of nitrogen excess, feedback-inhibited GlnA forms a stable complex with TnrA, which inhibits its DNA-binding activity. In contrast, feedback-inhibited GlnA acts as a chaperone to stabilize the DNA-binding activity of GlnR, which represses the transcription of nitrogen assimilation genes. This is Glutamine synthetase from Mycobacterium bovis (strain ATCC BAA-935 / AF2122/97).